The following is a 271-amino-acid chain: Aquaporin-1 (271 aa).

The Cytoplasmic portion of the chain corresponds to 1 to 11 (MASEFKKKLFW). Residues 12–29 (RAVVAEFLAMILFVFISI) form a helical membrane-spanning segment. Topologically, residues 30-48 (GSALGFNYPVRNNQTAGAA) are extracellular. Asparagine 42 is a glycosylation site (N-linked (GlcNAc...) asparagine). The helical transmembrane segment at 49-67 (QDNVKVSLAFGLSIATLAQ) threads the bilayer. The Cytoplasmic segment spans residues 68-70 (SVG). The stretch at 71–84 (HISGAHLNPAVTLG) is an intramembrane region. Positions 78 to 80 (NPA) match the NPA 1 motif. Residues 85-92 (LLLSCQIS) are Cytoplasmic-facing. The chain crosses the membrane as a helical span at residues 93–111 (ILRAVMYIIAQCVGAIVAT). Topologically, residues 112–135 (AILSGITSSLPDNSLGRNELAPGV) are extracellular. Residues 136 to 155 (NSGQGLGIEIIGTLQLVLCV) form a helical membrane-spanning segment. Topologically, residues 156–165 (LATTDRRRRD) are cytoplasmic. A helical membrane pass occupies residues 166-183 (LGGSGPLAIGLSVALGHL). Residues 184 to 188 (LAIDY) lie on the Extracellular side of the membrane. The stretch at 189 to 201 (TGCGINPARSFGS) is an intramembrane region. An NPA 2 motif is present at residues 194–196 (NPA). Over 202-208 (SVITHNF) the chain is Extracellular. Residues 209–226 (KDHWIFWVGPFIGGALAV) form a helical membrane-spanning segment. The Cytoplasmic portion of the chain corresponds to 227–271 (LIYDFILAPRSSDLTDRVKVWTSGQVEEYELDGDDINSRVEMKPK). Serine 249 bears the Phosphoserine mark. Tyrosine 255 carries the post-translational modification Phosphotyrosine. Serine 264 is modified (phosphoserine).

This sequence belongs to the MIP/aquaporin (TC 1.A.8) family. As to quaternary structure, homotetramer; each monomer provides an independent water pore. Component of the ankyrin-1 complex in the erythrocyte, composed of ANK1, RHCE, RHAG, SLC4A1, EPB42, GYPA, GYPB and AQP1. Interacts with EPHB2; involved in endolymph production in the inner ear. Identified in a complex with STOM. Interacts (via the N-terminal) with ANK1 (via ANK 1-5 repeats). Interacts (via the C-terminal) with EPB42.

The protein resides in the cell membrane. The catalysed reaction is H2O(in) = H2O(out). It carries out the reaction nitric oxide(out) = nitric oxide(in). The enzyme catalyses CO2(out) = CO2(in). It catalyses the reaction glycerol(in) = glycerol(out). The catalysed reaction is H2O2(out) = H2O2(in). It carries out the reaction K(+)(in) = K(+)(out). The enzyme catalyses Na(+)(in) = Na(+)(out). Functionally, forms a water channel that facilitates the transport of water across cell membranes, playing a crucial role in water homeostasis in various tissues. Could also be permeable to small solutes including hydrogen peroxide, glycerol and gases such as amonnia (NH3), nitric oxide (NO) and carbon dioxide (CO2). Recruited to the ankyrin-1 complex, a multiprotein complex of the erythrocyte membrane, it could be part of a CO2 metabolon, linking facilitated diffusion of CO2 across the membrane, anion exchange of Cl(-)/HCO3(-) and interconversion of dissolved CO2 and carbonic acid in the cytosol. In vitro, it shows non-selective gated cation channel activity and may be permeable to cations like K(+) and Na(+) in vivo. The chain is Aquaporin-1 from Canis lupus familiaris (Dog).